Here is a 37-residue protein sequence, read N- to C-terminus: Large ribosomal subunit protein bL36 (37 aa).

Belongs to the bacterial ribosomal protein bL36 family.

This is Large ribosomal subunit protein bL36 from Dictyoglomus thermophilum (strain ATCC 35947 / DSM 3960 / H-6-12).